Here is a 92-residue protein sequence, read N- to C-terminus: Long neurotoxin 1 (92 aa).

Positions 1-21 (MKTLLLTLVVVTIVCLDLGYT) are cleaved as a signal peptide. 5 disulfides stabilise this stretch: Cys-24–Cys-42, Cys-35–Cys-63, Cys-48–Cys-52, Cys-67–Cys-79, and Cys-80–Cys-85.

Belongs to the three-finger toxin family. Long-chain subfamily. Type II alpha-neurotoxin sub-subfamily. As to expression, expressed by the venom gland.

It localises to the secreted. Binds with high affinity to muscular (alpha-1/CHRNA1) and neuronal (alpha-7/CHRNA7) nicotinic acetylcholine receptor (nAChR) and inhibits acetylcholine from binding to the receptor, thereby impairing neuromuscular and neuronal transmission. This Oxyuranus microlepidotus (Inland taipan) protein is Long neurotoxin 1.